We begin with the raw amino-acid sequence, 458 residues long: Monomethylamine methyltransferase MtmB2 (458 aa).

O202 is a non-standard amino acid (pyrrolysine).

It belongs to the monomethylamine methyltransferase family. Can form a complex with MtmC.

It catalyses the reaction Co(I)-[methylamine-specific corrinoid protein] + methylamine + H(+) = methyl-Co(III)-[methylamine-specific corrinoid protein] + NH4(+). It functions in the pathway one-carbon metabolism; methanogenesis from methylamine. Functionally, catalyzes the transfer of the methyl group from monomethylamine to the corrinoid cofactor of MtmC. This is Monomethylamine methyltransferase MtmB2 (mtmB2) from Methanosarcina acetivorans (strain ATCC 35395 / DSM 2834 / JCM 12185 / C2A).